We begin with the raw amino-acid sequence, 198 residues long: MKIKNAEFITSAAKTADYPAGNIPEVALAGRSNVGKSSLLNRLVNRKSLARISSTPGRTRLINFFLVNGLFRLVDLPGYGYAKVSARERQGWRRMVEEYLKTRENLKGVVLLVDSRHPPTVLDVQMYEWLKYQGIPAAVAATKADKISRSKRAQSLKVIREVLNLTAKEPLVFFSAETSEGREEMLEVIGRWVGLSGR.

In terms of domain architecture, EngB-type G spans 22-195 (NIPEVALAGR…LEVIGRWVGL (174 aa)). GTP-binding positions include 30–37 (GRSNVGKS), 57–61 (GRTRL), 75–78 (DLPG), 142–145 (TKAD), and 174–176 (FSA). Mg(2+) is bound by residues Ser37 and Thr59.

It belongs to the TRAFAC class TrmE-Era-EngA-EngB-Septin-like GTPase superfamily. EngB GTPase family. It depends on Mg(2+) as a cofactor.

Its function is as follows. Necessary for normal cell division and for the maintenance of normal septation. In Pelotomaculum thermopropionicum (strain DSM 13744 / JCM 10971 / SI), this protein is Probable GTP-binding protein EngB.